A 100-amino-acid polypeptide reads, in one-letter code: Small ribosomal subunit protein uS14c (100 aa).

This sequence belongs to the universal ribosomal protein uS14 family. As to quaternary structure, part of the 30S ribosomal subunit.

The protein resides in the plastid. It is found in the chloroplast. In terms of biological role, binds 16S rRNA, required for the assembly of 30S particles. This Euglena gracilis protein is Small ribosomal subunit protein uS14c.